Here is an 863-residue protein sequence, read N- to C-terminus: MEERYNPEKVEPLWQAYWNQHQTFKATEDGSKPKYYLLEMFPYPSGKIHMGHVRNYTIGDVVVRYKRMKGFNVLHPMGWDAFGMPAENAAIDNNTHPAAWTYENIRTMRRQLKRMGFSYDWDREIATCRPEYYRWEQWLFLKMLDKDMVYRKESYVNWCDHCQTVLANEQVEQDMCWRCGKPVQQKKLWQWFFRITDFAEDLLVHCDKLPGWPDNVTLMQKNWIGKSQGSEIRFPIQGIDENIPVFTTRPDTLFGSTFMCLAPEHPLVETLSRGTDQAAAVTEFTTRVLNQERSSIALEKYEKEGVFTGAWCINPVTREKMPIYTANFALMEYGTGAVMSVPAHDQRDFDFARKYGLPIKVVIQPPGEPLDPATMIEAYTGQGTLADSGEFSGLGNLEAMGAITRWLENKGLGKTTVSFRLRDWGISRQRYWGTPIPVIHCPDCGIVPVKEETLPVVLPEDAALLDNGGSPLATLDGFARVNCPVCNRADARRETDTMDTFVESSWYFARYCSPRYDKGMFDPAAVAYWMPVDQYIGGVEHAILHLLYSRYFMRVLNTLGLIDFKEPFERLLTQGMVCKETLTCPEHGFIYPDDAETVNDKVICKRCNSDVEVGRVIKMSKSKKNVIDPNALLDQYGADITRLFCLFAAPPEKDLEWNDDGVEGCNRFINRVWRLADRCKSTYIDLLPYSGVVADLKGEPKKLFIKANQTIKKVTDDIEESFHFNTAISAVMELVNAMYSADLDPDQTDMGEVALFCIENIVLLLSPIVPHFCEELWSILGHGPSIVDQPWPDYQKDALLTDEILIVVQVNGKLRSKFSVDAAVSDDFIRKAALADEQVEKYIKGKTIKKVIVVKKKLVNIVV.

The 'HIGH' region motif lies at 42–52 (PYPSGKIHMGH). The short motif at 618 to 622 (KMSKS) is the 'KMSKS' region element. Lys-621 contributes to the ATP binding site.

The protein belongs to the class-I aminoacyl-tRNA synthetase family.

Its subcellular location is the cytoplasm. It carries out the reaction tRNA(Leu) + L-leucine + ATP = L-leucyl-tRNA(Leu) + AMP + diphosphate. The protein is Leucine--tRNA ligase of Desulforapulum autotrophicum (strain ATCC 43914 / DSM 3382 / VKM B-1955 / HRM2) (Desulfobacterium autotrophicum).